Consider the following 237-residue polypeptide: Sugar fermentation stimulation protein homolog (237 aa).

The protein belongs to the SfsA family.

The chain is Sugar fermentation stimulation protein homolog from Pseudomonas fluorescens (strain ATCC BAA-477 / NRRL B-23932 / Pf-5).